The sequence spans 550 residues: Hydroxylamine reductase (550 aa).

Positions 3, 6, 18, and 25 each coordinate [2Fe-2S] cluster. H249, E273, C317, C405, C433, C458, E492, and K494 together coordinate hybrid [4Fe-2O-2S] cluster. Residue C405 is modified to Cysteine persulfide.

It belongs to the HCP family. It depends on [2Fe-2S] cluster as a cofactor. Requires hybrid [4Fe-2O-2S] cluster as cofactor.

It localises to the cytoplasm. It catalyses the reaction A + NH4(+) + H2O = hydroxylamine + AH2 + H(+). In terms of biological role, catalyzes the reduction of hydroxylamine to form NH(3) and H(2)O. In Escherichia coli (strain SE11), this protein is Hydroxylamine reductase.